A 539-amino-acid polypeptide reads, in one-letter code: GMP synthase [glutamine-hydrolyzing] (539 aa).

The 199-residue stretch at 4–202 (KILILDFGSQ…VLGICRAKAD (199 aa)) folds into the Glutamine amidotransferase type-1 domain. The active-site Nucleophile is the Cys81. Catalysis depends on residues His176 and Glu178. The 193-residue stretch at 203 to 395 (WVMKDHIEEA…LGLPPEMVYR (193 aa)) folds into the GMPS ATP-PPase domain. 230–236 (SGGVDSS) contacts ATP.

In terms of assembly, homodimer.

The enzyme catalyses XMP + L-glutamine + ATP + H2O = GMP + L-glutamate + AMP + diphosphate + 2 H(+). The protein operates within purine metabolism; GMP biosynthesis; GMP from XMP (L-Gln route): step 1/1. Functionally, catalyzes the synthesis of GMP from XMP. The protein is GMP synthase [glutamine-hydrolyzing] of Cupriavidus pinatubonensis (strain JMP 134 / LMG 1197) (Cupriavidus necator (strain JMP 134)).